Here is a 372-residue protein sequence, read N- to C-terminus: Cyclin-dependent kinase 9 (372 aa).

Residues 19-315 (YEKLAKIGQG…SDDALNHDFF (297 aa)) enclose the Protein kinase domain. 25–33 (IGQGTFGEV) contacts ATP. Phosphoserine is present on lysine 35. At lysine 44 the chain carries N6-acetyllysine; by EP300/CBP, PCAF/KAT2B and GCN5/KAT2A. ATP is bound at residue lysine 48. An N6-acetyllysine; by PCAF/KAT2B and GCN5/KAT2A modification is found at lysine 48. Asparagine 54 is subject to Phosphothreonine. ATP is bound at residue 104-106 (DFC). The active-site Proton acceptor is the aspartate 149. The interval 166-191 (ADFGLARAFSLAKNSQPNRYTNRVVT) is T-loop. Aspartate 167 is a binding site for ATP. Serine 175 carries the post-translational modification Phosphoserine. Threonine 186 is subject to Phosphothreonine; by CaMK1D. The tract at residues 343-372 (RRKGSQITQQSTNQSRNPATTNQTEFERVF) is disordered. Serine 347 carries the phosphoserine; by CDK9 and PKA modification. Polar residues predominate over residues 347–366 (SQITQQSTNQSRNPATTNQT). The residue at position 350 (threonine 350) is a Phosphothreonine; by CDK9. Serine 353 carries the phosphoserine; by CDK9 modification. Phosphothreonine; by CDK9 is present on threonine 354. Serine 357 is modified (phosphoserine; by CDK9). Residues threonine 362 and threonine 363 each carry the phosphothreonine; by CDK9 modification.

The protein belongs to the protein kinase superfamily. CMGC Ser/Thr protein kinase family. CDC2/CDKX subfamily. In terms of assembly, component of the super elongation complex (SEC), at least composed of EAF1, EAF2, CDK9, MLLT3/AF9, AFF (AFF1 or AFF4), the P-TEFb complex and ELL (ELL, ELL2 or ELL3). Associates with CCNT1/cyclin-T1, CCNT2/cyclin-T2 (isoform A and isoform B) or CCNK/cyclin-K to form active P-TEFb. P-TEFb forms a complex with AFF4/AF5Q31 and is part of the super elongation complex (SEC). Component of a complex which is composed of at least 5 members: HTATSF1/Tat-SF1, P-TEFb complex, RNA pol II, SUPT5H and NCL/nucleolin. Associates with UBR5 and forms a transcription regulatory complex composed of CDK9, RNAP II, UBR5 and TFIIS/TCEA1 that can stimulate target gene transcription (e.g. gamma fibrinogen/FGG) by recruiting their promoters. Component of the 7SK snRNP inactive complex which is composed of at least 8 members: P-TEFb (composed of CDK9 and CCNT1/cyclin-T1), HEXIM1, HEXIM2, LARP7, BCDIN3, SART3 proteins and 7SK and U6 snRNAs. This inactive 7SK snRNP complex can also interact with NCOR1 and HDAC3, probably to regulate CDK9 acetylation. Release of P-TEFb from P-TEFb/7SK snRNP complex requires both PP2B to transduce calcium Ca(2+) signaling in response to stimuli (e.g. UV or hexamethylene bisacetamide (HMBA)) and PPP1CA to dephosphorylate Thr-186. This released P-TEFb remains inactive in the pre-initiation complex with BRD4 until new Thr-186 phosphorylation occurs after the synthesis of a short RNA. Interacts with BRD4; to target chromatin binding. Interacts with JMJD6. Interacts with activated nuclear STAT3 and RELA/p65. Binds to AR and MYOD1. Forms a complex composed of CDK9, CCNT1/cyclin-T1, EP300 and GATA4 that stimulates hypertrophy in cardiomyocytes. The large PER complex involved in the repression of transcriptional termination is composed of at least PER2, CDK9, DDX5, DHX9, NCBP1 and POLR2A. Interacts with HSF1. Interacts with TBX21. Isoform 3: binds to KU70/XRCC6. Interacts with WDR43. Interacts with ZMYND8; the association appears to occur between homodimeric ZMYND8 and the activated form of the P-TEFb complex. (Microbial infection) Interacts with the acidic/proline-rich region of HIV-1 and HIV-2 Tat via T-loop region and is thus required for HIV to hijack host transcription machinery during its replication through cooperative binding to viral TAR RNA. As to quaternary structure, (Microbial infection) Interacts with human herpes virus 1 (HHV-1) protein ICP22; this interaction blocks the recruitment of positive transcription elongation factor b (P-TEFb) to the viral promoter. In terms of processing, autophosphorylation at Thr-186, Ser-347, Thr-350, Ser-353, Thr-354 and Ser-357 triggers kinase activity by promoting cyclin and substrate binding (e.g. HIV TAT) upon conformational changes. Thr-186 phosphorylation requires the calcium Ca(2+) signaling pathway, including CaMK1D and calmodulin. This inhibition is relieved by Thr-29 dephosphorylation. However, phosphorylation at Thr-29 is inhibitory within the HIV transcription initiation complex. Phosphorylation at Ser-175 inhibits kinase activity. Can be phosphorylated on either Thr-362 or Thr-363 but not on both simultaneously. Post-translationally, dephosphorylation of Thr-186 by PPM1A and PPM1B blocks CDK9 activity and may lead to CDK9 proteasomal degradation. However, PPP1CA-mediated Thr-186 dephosphorylation is required to release P-TEFb from its inactive P-TEFb/7SK snRNP complex. Dephosphorylated at Ser-347 by the PNUTS-PP1 complex during RNA polymerase II transcription pause-release. Dephosphorylation of C-terminus Thr and Ser residues by protein phosphatase-1 (PP1) triggers CDK9 activity, contributing to the activation of HIV-1 transcription. N6-acetylation of Lys-44 promotes kinase activity, whereas acetylation of both Lys-44 and Lys-48 mediated by PCAF/KAT2B and GCN5/KAT2A reduces kinase activity. The acetylated form associates with PML bodies in the nuclear matrix and with the transcriptionally silent HIV-1 genome; deacetylated upon transcription stimulation. Deacetylated by SIRT7, promoting the kinase activity and subsequent 'Ser-2' phosphorylation of the C-terminal domain (CTD) of RNA polymerase II. In terms of processing, polyubiquitinated and thus activated by UBR5. This ubiquitination is promoted by TFIIS/TCEA1 and favors 'Ser-2' phosphorylation of RPB1/POLR2A CTD. Ubiquitous.

It localises to the nucleus. It is found in the cytoplasm. The protein localises to the PML body. It carries out the reaction L-seryl-[protein] + ATP = O-phospho-L-seryl-[protein] + ADP + H(+). It catalyses the reaction L-threonyl-[protein] + ATP = O-phospho-L-threonyl-[protein] + ADP + H(+). The catalysed reaction is [DNA-directed RNA polymerase] + ATP = phospho-[DNA-directed RNA polymerase] + ADP + H(+). Its activity is regulated as follows. Inhibited by CDKI-71, CR8, GPC-286199, AG-024322, flavopiridol (alvocidib), RBG-286147, anilinopyrimidine 32, arylazopyrazole 31b, indirubin 3'-monoxime, meriolin 3,P276-00, olomoucine II, pyrazolotriazine, meriolin, variolin, thiazolyl-pyrimidine, thiazolyl-pyrimidine, indirubin-30-monoxime, ZK 304709, AG-012986, AT7519, R547, RGB-286638, imidazole pyrimidine, EXEL-3700, EXEL-8647, 5,6-dichloro-1-b-ribofur-anosyl-benzimidazole (DRB), P276-00, roscovitine (seliciclib, CYC202) and SNS-032 (BMS-387032). Activation by Thr-186 phosphorylation is calcium Ca(2+) signaling pathway-dependent; actively inactivated by dephosphorylation mediated by PPP1CA, PPM1A and PPM1B. Reversibly repressed by acetylation at Lys-44 and Lys-48. Its function is as follows. Protein kinase involved in the regulation of transcription. Member of the cyclin-dependent kinase pair (CDK9/cyclin-T) complex, also called positive transcription elongation factor b (P-TEFb), which facilitates the transition from abortive to productive elongation by phosphorylating the CTD (C-terminal domain) of the large subunit of RNA polymerase II (RNAP II) POLR2A, SUPT5H and RDBP. This complex is inactive when in the 7SK snRNP complex form. Phosphorylates EP300, MYOD1, RPB1/POLR2A and AR and the negative elongation factors DSIF and NELFE. Regulates cytokine inducible transcription networks by facilitating promoter recognition of target transcription factors (e.g. TNF-inducible RELA/p65 activation and IL-6-inducible STAT3 signaling). Promotes RNA synthesis in genetic programs for cell growth, differentiation and viral pathogenesis. P-TEFb is also involved in cotranscriptional histone modification, mRNA processing and mRNA export. Modulates a complex network of chromatin modifications including histone H2B monoubiquitination (H2Bub1), H3 lysine 4 trimethylation (H3K4me3) and H3K36me3; integrates phosphorylation during transcription with chromatin modifications to control co-transcriptional histone mRNA processing. The CDK9/cyclin-K complex has also a kinase activity towards CTD of RNAP II and can substitute for CDK9/cyclin-T P-TEFb in vitro. Replication stress response protein; the CDK9/cyclin-K complex is required for genome integrity maintenance, by promoting cell cycle recovery from replication arrest and limiting single-stranded DNA amount in response to replication stress, thus reducing the breakdown of stalled replication forks and avoiding DNA damage. In addition, probable function in DNA repair of isoform 2 via interaction with KU70/XRCC6. Promotes cardiac myocyte enlargement. RPB1/POLR2A phosphorylation on 'Ser-2' in CTD activates transcription. AR phosphorylation modulates AR transcription factor promoter selectivity and cell growth. DSIF and NELF phosphorylation promotes transcription by inhibiting their negative effect. The phosphorylation of MYOD1 enhances its transcriptional activity and thus promotes muscle differentiation. Catalyzes phosphorylation of KAT5, promoting KAT5 recruitment to chromatin and histone acetyltransferase activity. The protein is Cyclin-dependent kinase 9 of Homo sapiens (Human).